Reading from the N-terminus, the 173-residue chain is Crossover junction endodeoxyribonuclease RuvC (173 aa).

Catalysis depends on residues aspartate 8, glutamate 67, and aspartate 139. Aspartate 8, glutamate 67, and aspartate 139 together coordinate Mg(2+).

This sequence belongs to the RuvC family. As to quaternary structure, homodimer which binds Holliday junction (HJ) DNA. The HJ becomes 2-fold symmetrical on binding to RuvC with unstacked arms; it has a different conformation from HJ DNA in complex with RuvA. In the full resolvosome a probable DNA-RuvA(4)-RuvB(12)-RuvC(2) complex forms which resolves the HJ. The cofactor is Mg(2+).

The protein resides in the cytoplasm. The catalysed reaction is Endonucleolytic cleavage at a junction such as a reciprocal single-stranded crossover between two homologous DNA duplexes (Holliday junction).. In terms of biological role, the RuvA-RuvB-RuvC complex processes Holliday junction (HJ) DNA during genetic recombination and DNA repair. Endonuclease that resolves HJ intermediates. Cleaves cruciform DNA by making single-stranded nicks across the HJ at symmetrical positions within the homologous arms, yielding a 5'-phosphate and a 3'-hydroxyl group; requires a central core of homology in the junction. The consensus cleavage sequence is 5'-(A/T)TT(C/G)-3'. Cleavage occurs on the 3'-side of the TT dinucleotide at the point of strand exchange. HJ branch migration catalyzed by RuvA-RuvB allows RuvC to scan DNA until it finds its consensus sequence, where it cleaves and resolves the cruciform DNA. This is Crossover junction endodeoxyribonuclease RuvC from Shewanella frigidimarina (strain NCIMB 400).